Here is a 365-residue protein sequence, read N- to C-terminus: uncharacterized protein (365 aa).

Residue 29-36 participates in ATP binding; sequence GPLNSGKS.

This sequence belongs to the archaeal ATPase family.

This is an uncharacterized protein from Methanocaldococcus jannaschii (strain ATCC 43067 / DSM 2661 / JAL-1 / JCM 10045 / NBRC 100440) (Methanococcus jannaschii).